Consider the following 204-residue polypeptide: Methylthioribulose-1-phosphate dehydratase (204 aa).

2 residues coordinate Zn(2+): His-94 and His-96.

Belongs to the aldolase class II family. MtnB subfamily. Zn(2+) is required as a cofactor.

It catalyses the reaction 5-(methylsulfanyl)-D-ribulose 1-phosphate = 5-methylsulfanyl-2,3-dioxopentyl phosphate + H2O. The protein operates within amino-acid biosynthesis; L-methionine biosynthesis via salvage pathway; L-methionine from S-methyl-5-thio-alpha-D-ribose 1-phosphate: step 2/6. Functionally, catalyzes the dehydration of methylthioribulose-1-phosphate (MTRu-1-P) into 2,3-diketo-5-methylthiopentyl-1-phosphate (DK-MTP-1-P). This Cronobacter sakazakii (strain ATCC BAA-894) (Enterobacter sakazakii) protein is Methylthioribulose-1-phosphate dehydratase.